The sequence spans 322 residues: Mas-related G-protein coupled receptor member B5 (322 aa).

At 1–34 (MGLTTPAWNINNTVVNGSNNTEHFSCVSKFNTLN) the chain is on the extracellular side. Residues asparagine 11, asparagine 16, and asparagine 19 are each glycosylated (N-linked (GlcNAc...) asparagine). The chain crosses the membrane as a helical span at residues 35–55 (FLTVIIAMFGLAGNAIVLWLL). The Cytoplasmic segment spans residues 56 to 70 (AFHLPRNAFSVYVCN). Residues 71-91 (LACADFLQLCTQILGSLECFL) traverse the membrane as a helical segment. Residues 92–98 (QLNRRHT) are Extracellular-facing. Residues 99-119 (FFLTVVFMFAYLAGLCMIAAI) traverse the membrane as a helical segment. Residues 120 to 147 (SVERSLSVMWPIWYHCQRPRHTSSIMCA) lie on the Cytoplasmic side of the membrane. The chain crosses the membrane as a helical span at residues 148 to 168 (LLWAFCLLLNFLLGEGCGLLF). The Extracellular portion of the chain corresponds to 169–172 (SDPK). A helical membrane pass occupies residues 173–193 (YYFCITCALITTALIILLTVV). The Cytoplasmic segment spans residues 194-216 (PSVSSLALLVKMICGSHRIPVTR). A helical membrane pass occupies residues 217–237 (FYVTIALTLVVFIFLGLPFGI). Residues 238 to 260 (YSSFLIMFKEFQSIFSYHVLEVT) lie on the Extracellular side of the membrane. A helical transmembrane segment spans residues 261-281 (IFLSCVNSCANPIIYFLVGSI). Over 282–322 (RQHRLQWQSLKLLLQRAMQDTPEEDSGERVPSQRSGELESV) the chain is Cytoplasmic. The tract at residues 302 to 322 (TPEEDSGERVPSQRSGELESV) is disordered.

It belongs to the G-protein coupled receptor 1 family. Mas subfamily.

Its subcellular location is the membrane. Its function is as follows. Orphan receptor. Probably involved in the function of nociceptive neurons. May regulate nociceptor function and/or development, including the sensation or modulation of pain. This Mus musculus (Mouse) protein is Mas-related G-protein coupled receptor member B5 (Mrgprb5).